Reading from the N-terminus, the 169-residue chain is Peptide methionine sulfoxide reductase MsrA (169 aa).

Cys-10 is an active-site residue.

This sequence belongs to the MsrA Met sulfoxide reductase family.

The enzyme catalyses L-methionyl-[protein] + [thioredoxin]-disulfide + H2O = L-methionyl-(S)-S-oxide-[protein] + [thioredoxin]-dithiol. It catalyses the reaction [thioredoxin]-disulfide + L-methionine + H2O = L-methionine (S)-S-oxide + [thioredoxin]-dithiol. In terms of biological role, has an important function as a repair enzyme for proteins that have been inactivated by oxidation. Catalyzes the reversible oxidation-reduction of methionine sulfoxide in proteins to methionine. This chain is Peptide methionine sulfoxide reductase MsrA, found in Streptococcus uberis (strain ATCC BAA-854 / 0140J).